A 316-amino-acid chain; its full sequence is HPr kinase/phosphorylase (316 aa).

Residues His146 and Lys167 contribute to the active site. An ATP-binding site is contributed by 161-168 (GESGLGKS). Ser168 serves as a coordination point for Mg(2+). Asp185 functions as the Proton acceptor; for phosphorylation activity. Proton donor; for dephosphorylation activity in the catalytic mechanism. Residues 209-218 (LEVRGIGLLD) are important for the catalytic mechanism of both phosphorylation and dephosphorylation. Residue Glu210 participates in Mg(2+) binding. Residue Arg252 is part of the active site. Positions 273 to 278 (QVEAGR) are important for the catalytic mechanism of dephosphorylation.

It belongs to the HPrK/P family. Homohexamer. The cofactor is Mg(2+).

The catalysed reaction is [HPr protein]-L-serine + ATP = [HPr protein]-O-phospho-L-serine + ADP + H(+). It catalyses the reaction [HPr protein]-O-phospho-L-serine + phosphate + H(+) = [HPr protein]-L-serine + diphosphate. Its function is as follows. Catalyzes the ATP- as well as the pyrophosphate-dependent phosphorylation of a specific serine residue in HPr, a phosphocarrier protein of the phosphoenolpyruvate-dependent sugar phosphotransferase system (PTS). HprK/P also catalyzes the pyrophosphate-producing, inorganic phosphate-dependent dephosphorylation (phosphorolysis) of seryl-phosphorylated HPr (P-Ser-HPr). This is HPr kinase/phosphorylase from Polaromonas sp. (strain JS666 / ATCC BAA-500).